A 232-amino-acid polypeptide reads, in one-letter code: dTTP/UTP pyrophosphatase (232 aa).

Asp-103 (proton acceptor) is an active-site residue.

This sequence belongs to the Maf family. YhdE subfamily. The cofactor is a divalent metal cation.

The protein resides in the cytoplasm. The catalysed reaction is dTTP + H2O = dTMP + diphosphate + H(+). It catalyses the reaction UTP + H2O = UMP + diphosphate + H(+). In terms of biological role, nucleoside triphosphate pyrophosphatase that hydrolyzes dTTP and UTP. May have a dual role in cell division arrest and in preventing the incorporation of modified nucleotides into cellular nucleic acids. The chain is dTTP/UTP pyrophosphatase from Bartonella henselae (strain ATCC 49882 / DSM 28221 / CCUG 30454 / Houston 1) (Rochalimaea henselae).